The primary structure comprises 279 residues: 3-methyl-2-oxobutanoate hydroxymethyltransferase (279 aa).

Mg(2+) contacts are provided by aspartate 44 and aspartate 83. Residues 44 to 45 (DS), aspartate 83, and lysine 113 contribute to the 3-methyl-2-oxobutanoate site. Glutamate 115 lines the Mg(2+) pocket. Glutamate 182 functions as the Proton acceptor in the catalytic mechanism.

It belongs to the PanB family. As to quaternary structure, homodecamer; pentamer of dimers. It depends on Mg(2+) as a cofactor.

It localises to the cytoplasm. The enzyme catalyses 3-methyl-2-oxobutanoate + (6R)-5,10-methylene-5,6,7,8-tetrahydrofolate + H2O = 2-dehydropantoate + (6S)-5,6,7,8-tetrahydrofolate. Its pathway is cofactor biosynthesis; (R)-pantothenate biosynthesis; (R)-pantoate from 3-methyl-2-oxobutanoate: step 1/2. Functionally, catalyzes the reversible reaction in which hydroxymethyl group from 5,10-methylenetetrahydrofolate is transferred onto alpha-ketoisovalerate to form ketopantoate. The sequence is that of 3-methyl-2-oxobutanoate hydroxymethyltransferase from Desulfotalea psychrophila (strain LSv54 / DSM 12343).